The sequence spans 369 residues: Anhydro-N-acetylmuramic acid kinase (369 aa).

12-19 lines the ATP pocket; sequence GTSLDGVD.

This sequence belongs to the anhydro-N-acetylmuramic acid kinase family.

The catalysed reaction is 1,6-anhydro-N-acetyl-beta-muramate + ATP + H2O = N-acetyl-D-muramate 6-phosphate + ADP + H(+). It functions in the pathway amino-sugar metabolism; 1,6-anhydro-N-acetylmuramate degradation. It participates in cell wall biogenesis; peptidoglycan recycling. Catalyzes the specific phosphorylation of 1,6-anhydro-N-acetylmuramic acid (anhMurNAc) with the simultaneous cleavage of the 1,6-anhydro ring, generating MurNAc-6-P. Is required for the utilization of anhMurNAc either imported from the medium or derived from its own cell wall murein, and thus plays a role in cell wall recycling. In Shigella flexneri, this protein is Anhydro-N-acetylmuramic acid kinase.